Here is a 90-residue protein sequence, read N- to C-terminus: Small ribosomal subunit protein uS15 (90 aa).

Belongs to the universal ribosomal protein uS15 family. As to quaternary structure, part of the 30S ribosomal subunit. Forms a bridge to the 50S subunit in the 70S ribosome, contacting the 23S rRNA.

In terms of biological role, one of the primary rRNA binding proteins, it binds directly to 16S rRNA where it helps nucleate assembly of the platform of the 30S subunit by binding and bridging several RNA helices of the 16S rRNA. Its function is as follows. Forms an intersubunit bridge (bridge B4) with the 23S rRNA of the 50S subunit in the ribosome. The chain is Small ribosomal subunit protein uS15 from Blochmanniella floridana.